We begin with the raw amino-acid sequence, 340 residues long: ATPase GET3 (340 aa).

35 to 42 (KGGVGKTT) provides a ligand contact to ATP. Residue aspartate 64 is part of the active site. Residues glutamate 245 and asparagine 272 each coordinate ATP. Residues cysteine 283 and cysteine 286 each coordinate Zn(2+).

Belongs to the arsA ATPase family. Homodimer.

It localises to the cytoplasm. It is found in the endoplasmic reticulum. Functionally, ATPase required for the post-translational delivery of tail-anchored (TA) proteins to the endoplasmic reticulum. Recognizes and selectively binds the transmembrane domain of TA proteins in the cytosol. This complex then targets to the endoplasmic reticulum by membrane-bound receptors, where the tail-anchored protein is released for insertion. This process is regulated by ATP binding and hydrolysis. ATP binding drives the homodimer towards the closed dimer state, facilitating recognition of newly synthesized TA membrane proteins. ATP hydrolysis is required for insertion. Subsequently, the homodimer reverts towards the open dimer state, lowering its affinity for the membrane-bound receptor, and returning it to the cytosol to initiate a new round of targeting. This Chaetomium globosum (strain ATCC 6205 / CBS 148.51 / DSM 1962 / NBRC 6347 / NRRL 1970) (Soil fungus) protein is ATPase GET3.